Consider the following 169-residue polypeptide: Anaerobic nitrite reductase NSHB2 (169 aa).

The region spanning 16-166 (SFSEEQEALV…LVAAIKQEMK (151 aa)) is the Globin domain. A Homodimerization motif is present at residues 49–53 (EVAPS). Residues serine 59, lysine 73, histidine 77, arginine 107, threonine 111, and histidine 112 each coordinate heme b. A Homodimerization motif is present at residues 119–131 (DAHFEVTRFALLE).

The protein belongs to the plant globin family. In terms of assembly, homodimer. Requires heme b as cofactor. As to expression, expressed in leaves, but not in roots. Present in embryonic organs including embryos, coleoptiles and seminal roots.

The protein localises to the cytoplasm. The protein resides in the nucleus. It catalyses the reaction Fe(III)-heme b-[protein] + nitric oxide + H2O = Fe(II)-heme b-[protein] + nitrite + 2 H(+). Phytoglobin that reduces nitrite to nitric oxide under anoxic conditions (e.g. during flooding or in waterlogged soil). May not function as an oxygen storage or transport protein. Has an unusually high affinity for O(2) through an hexacoordinate heme iron because of a very low dissociation constant. Promotes tolerance to low potassium K(+) conditions. The polypeptide is Anaerobic nitrite reductase NSHB2 (Oryza sativa subsp. japonica (Rice)).